Reading from the N-terminus, the 406-residue chain is MAPELSSNWKKLQEKLKAPQPTKSAPISQEAAFKQAISKKSISSETLKRKAEESQQQQQASNPSKKPKRQKSQTQSQPSSQKPTEEKMGGNVQSKPTTSSSPNSTLPSLHLWADEQGISSESLAEAYNLGLRGTSSSSSSSHIPLLSTLPPAIPNAGLTLPGHSSSSPKSNKNGLPLPTDLPSSLTLSNGLTLDTSTTTDLALILQATKSNTLGKYLSIDCEMVGTGPSGATSVLARCSIVDFHGHQIYDSYVRPTAFVTDWRTHVSGISKRHMASARSFESVQATVAALLKGRILVGHDVKHDLEVLGFEHPHRDIRDTAKYSGFRKYGHGPKPSLRVLAKEVLGIEIHQGQHSSVEDARVAMLLFRKEKHGFDMENSNRYEEGQAKKGGNGGGGGGGKKKKGKK.

Residues 1–10 (MAPELSSNWK) show a composition bias toward polar residues. 2 disordered regions span residues 1–108 (MAPE…TLPS) and 156–181 (AGLT…PTDL). Low complexity-rich tracts occupy residues 54–64 (SQQQQQASNPS), 72–82 (SQTQSQPSSQK), and 94–108 (SKPT…TLPS). Polar residues predominate over residues 162-173 (GHSSSSPKSNKN). The Exonuclease domain occupies 216-367 (YLSIDCEMVG…EDARVAMLLF (152 aa)). Residues 377–387 (ENSNRYEEGQA) show a composition bias toward basic and acidic residues. Residues 377–406 (ENSNRYEEGQAKKGGNGGGGGGGKKKKGKK) are disordered. Residues 388 to 398 (KKGGNGGGGGG) show a composition bias toward gly residues.

The protein belongs to the REXO4 family.

Its subcellular location is the nucleus. Exoribonuclease involved in ribosome biosynthesis. Involved in the processing of ITS1, the internal transcribed spacer localized between the 18S and 5.8S rRNAs. This Neurospora crassa (strain ATCC 24698 / 74-OR23-1A / CBS 708.71 / DSM 1257 / FGSC 987) protein is RNA exonuclease 4 (rex-4).